A 3066-amino-acid chain; its full sequence is Genome polyprotein (3066 aa).

The region spanning 176 to 317 (LKKAVGSGKV…LDNVYTIEHY (142 aa)) is the Peptidase S30 domain. Catalysis depends on for P1 proteinase activity residues histidine 230, glutamate 239, and serine 271. The Involved in interaction with stylet and aphid transmission signature appears at 370–373 (KLSC). The short motif at 626-628 (PTK) is the Involved in virions binding and aphid transmission element. Residues 652-774 (MYIAKEGYCY…EGEMKHYRVG (123 aa)) enclose the Peptidase C6 domain. Residues cysteine 660 and histidine 733 each act as for helper component proteinase activity in the active site. The region spanning 1245–1397 (TITLSTSTEF…TQHPVKLKVE (153 aa)) is the Helicase ATP-binding domain. 1258-1265 (GAVGSGKS) provides a ligand contact to ATP. The short motif at 1347 to 1350 (DECH) is the DECH box element. In terms of domain architecture, Helicase C-terminal spans 1416-1575 (DMVQYGHNLL…GLPVTTQGVS (160 aa)). Positions 1900–1909 (KKGKQKGSTH) match the Nuclear localization signal motif. Residue tyrosine 1924 is modified to O-(5'-phospho-RNA)-tyrosine. In terms of domain architecture, Peptidase C4 spans 2046–2264 (SKSTYKGLRD…IAWGSLNLVD (219 aa)). Catalysis depends on for nuclear inclusion protein A activity residues histidine 2091, aspartate 2126, and cysteine 2196. Positions 2530-2654 (WVYCHADGSQ…AVQKEDVWLY (125 aa)) constitute a RdRp catalytic domain. The interval 2797–2839 (EVYESVSTQSSKKEEEKDAGADEREKDKGKGPADKDVGAGSKG) is disordered. Residues 2807–2833 (SKKEEEKDAGADEREKDKGKGPADKDV) are compositionally biased toward basic and acidic residues. The residue at position 3048 (threonine 3048) is a Phosphothreonine.

It belongs to the potyviridae genome polyprotein family. In terms of assembly, interacts with host eIF4E protein (via cap-binding region); this interaction mediates the translation of the VPg-viral RNA conjugates. Part of a complex that comprises VPg, RNA, host EIF4E and EIF4G; this interaction mediates the translation of the VPg-viral RNA conjugates. In terms of processing, VPg is uridylylated by the polymerase and is covalently attached to the 5'-end of the genomic RNA. This uridylylated form acts as a nucleotide-peptide primer for the polymerase. Post-translationally, genome polyprotein of potyviruses undergoes post-translational proteolytic processing by the main proteinase NIa-pro resulting in the production of at least ten individual proteins. The P1 proteinase and the HC-pro cleave only their respective C-termini autocatalytically. 6K1 is essential for proper proteolytic separation of P3 from CI.

The protein localises to the host cytoplasmic vesicle. It localises to the host nucleus. It is found in the virion. The enzyme catalyses RNA(n) + a ribonucleoside 5'-triphosphate = RNA(n+1) + diphosphate. It carries out the reaction Hydrolyzes glutaminyl bonds, and activity is further restricted by preferences for the amino acids in P6 - P1' that vary with the species of potyvirus, e.g. Glu-Xaa-Xaa-Tyr-Xaa-Gln-|-(Ser or Gly) for the enzyme from tobacco etch virus. The natural substrate is the viral polyprotein, but other proteins and oligopeptides containing the appropriate consensus sequence are also cleaved.. It catalyses the reaction Hydrolyzes a Gly-|-Gly bond at its own C-terminus, commonly in the sequence -Tyr-Xaa-Val-Gly-|-Gly, in the processing of the potyviral polyprotein.. In terms of biological role, required for aphid transmission and also has proteolytic activity. Only cleaves a Gly-Gly dipeptide at its own C-terminus. Interacts with virions and aphid stylets. Acts as a suppressor of RNA-mediated gene silencing, also known as post-transcriptional gene silencing (PTGS), a mechanism of plant viral defense that limits the accumulation of viral RNAs. May have RNA-binding activity. Functionally, has helicase activity. It may be involved in replication. Indispensable for virus replication. Reduces the abundance of host transcripts related to jasmonic acid biosynthesis therefore altering the host defenses. In order to increase its own stability, decreases host protein degradation pathways. Its function is as follows. Indispensable for virus replication. In terms of biological role, mediates the cap-independent, EIF4E-dependent translation of viral genomic RNAs. Binds to the cap-binding site of host EIF4E and thus interferes with the host EIF4E-dependent mRNA export and translation. VPg-RNA directly binds EIF4E and is a template for transcription. Also forms trimeric complexes with EIF4E-EIF4G, which are templates for translation. Functionally, has RNA-binding and proteolytic activities. An RNA-dependent RNA polymerase that plays an essential role in the virus replication. Its function is as follows. Involved in aphid transmission, cell-to-cell and systemis movement, encapsidation of the viral RNA and in the regulation of viral RNA amplification. This Bean common mosaic necrosis virus (strain NL-3) (BCMNV) protein is Genome polyprotein.